The primary structure comprises 387 residues: Cysteine desulfurase IscS (387 aa).

Pyridoxal 5'-phosphate-binding positions include 73–74, asparagine 155, glutamine 183, and 203–205; these read AT and SAH. An N6-(pyridoxal phosphate)lysine modification is found at lysine 206. Threonine 241 lines the pyridoxal 5'-phosphate pocket. The active-site Cysteine persulfide intermediate is cysteine 328. Cysteine 328 is a [2Fe-2S] cluster binding site.

The protein belongs to the class-V pyridoxal-phosphate-dependent aminotransferase family. NifS/IscS subfamily. In terms of assembly, homodimer. Forms a heterotetramer with IscU, interacts with other sulfur acceptors. Requires pyridoxal 5'-phosphate as cofactor.

It localises to the cytoplasm. It carries out the reaction (sulfur carrier)-H + L-cysteine = (sulfur carrier)-SH + L-alanine. It participates in cofactor biosynthesis; iron-sulfur cluster biosynthesis. Master enzyme that delivers sulfur to a number of partners involved in Fe-S cluster assembly, tRNA modification or cofactor biosynthesis. Catalyzes the removal of elemental sulfur atoms from cysteine to produce alanine. Functions as a sulfur delivery protein for Fe-S cluster synthesis onto IscU, an Fe-S scaffold assembly protein, as well as other S acceptor proteins. This is Cysteine desulfurase IscS from Helicobacter pylori (strain ATCC 700392 / 26695) (Campylobacter pylori).